Here is a 242-residue protein sequence, read N- to C-terminus: Glucosamine-6-phosphate deaminase (242 aa).

Aspartate 67 functions as the Proton acceptor; for enolization step in the catalytic mechanism. The active-site For ring-opening step is the asparagine 136. Catalysis depends on histidine 138, which acts as the Proton acceptor; for ring-opening step. The For ring-opening step role is filled by glutamate 143.

It belongs to the glucosamine/galactosamine-6-phosphate isomerase family. NagB subfamily.

The catalysed reaction is alpha-D-glucosamine 6-phosphate + H2O = beta-D-fructose 6-phosphate + NH4(+). It functions in the pathway amino-sugar metabolism; N-acetylneuraminate degradation; D-fructose 6-phosphate from N-acetylneuraminate: step 5/5. Functionally, catalyzes the reversible isomerization-deamination of glucosamine 6-phosphate (GlcN6P) to form fructose 6-phosphate (Fru6P) and ammonium ion. The polypeptide is Glucosamine-6-phosphate deaminase (Clostridium beijerinckii (strain ATCC 51743 / NCIMB 8052) (Clostridium acetobutylicum)).